Reading from the N-terminus, the 389-residue chain is snRNA-activating protein complex subunit 1 (389 aa).

The segment covering 1–15 (MGTPAGAGTRPTGAG) has biased composition (low complexity). Disordered stretches follow at residues 1–22 (MGTP…GVGI), 245–276 (WHKE…ERCE), and 290–389 (SAVV…KRKC). Residues 20–187 (VGIPPGLQTD…QKFKDPNDRV (168 aa)) form an SNAPC3-binding region. Residues 183 to 287 (PNDRVMKLIT…AVSLAKIKAK (105 aa)) form an SNAPC4-binding region. A compositionally biased stretch (basic and acidic residues) spans 245 to 262 (WHKERKNPSLKPKLKDGE). A phosphoserine mark is found at Ser308 and Ser309.

As to quaternary structure, part of the SNAPc complex composed of 5 subunits: SNAPC1, SNAPC2, SNAPC3, SNAPC4 and SNAPC5. SNAPC1 interacts with SNAPC3, SNAPC4 and TBP.

The protein localises to the nucleus. Functionally, part of the SNAPc complex required for the transcription of both RNA polymerase II and III small-nuclear RNA genes. Binds to the proximal sequence element (PSE), a non-TATA-box basal promoter element common to these 2 types of genes. Recruits TBP and BRF2 to the U6 snRNA TATA box. The chain is snRNA-activating protein complex subunit 1 (Snapc1) from Mus musculus (Mouse).